Consider the following 209-residue polypeptide: Mitochondrial import inner membrane translocase subunit Tim23 (209 aa).

3 helical membrane-spanning segments follow: residues 73-93, 125-145, and 180-200; these read FELA…FGAV, ALWA…GVII, and GGLA…WEHI.

The protein belongs to the Tim17/Tim22/Tim23 family. In terms of assembly, component of the TIM23 complex at least composed of timm23, timm17 and timm50. The complex interacts with the timm44 component of the PAM complex.

It localises to the mitochondrion inner membrane. Essential component of the TIM23 complex, a complex that mediates the translocation of transit peptide-containing proteins across the mitochondrial inner membrane. The chain is Mitochondrial import inner membrane translocase subunit Tim23 (timm23) from Xenopus tropicalis (Western clawed frog).